An 86-amino-acid polypeptide reads, in one-letter code: Toxin Tpa6 (86 aa).

The N-terminal stretch at 1–20 (MSIFPIALALLLIGLEEGEA) is a signal peptide. The LCN-type CS-alpha/beta domain maps to 22–85 (RDGYPLSKNN…WGDPGTKPCM (64 aa)). 4 disulfides stabilise this stretch: cysteine 33-cysteine 84, cysteine 37-cysteine 58, cysteine 43-cysteine 64, and cysteine 47-cysteine 66.

Belongs to the long (4 C-C) scorpion toxin superfamily. Sodium channel inhibitor family. Beta subfamily. As to expression, expressed by the venom gland.

Its subcellular location is the secreted. Its function is as follows. Beta toxins bind voltage-independently at site-4 of sodium channels (Nav) and shift the voltage of activation toward more negative potentials thereby affecting sodium channel activation and promoting spontaneous and repetitive firing. This Tityus pachyurus (Colombian scorpion) protein is Toxin Tpa6.